The primary structure comprises 247 residues: MGQCLAVHRRIMASQEFPNIPQPESQCHDAFIRYSPGRYERRAARSQVDYYLLPQAPRLMTEDLDKKEFQRLYDARCELVECPAGRRAMQLDVQIYADRYEATLNKILETSQELDKGLEDIFQAYTKDDPLADKVMNCRLTVDEMGRVYEHFFRESAWNLDSFVEYRKNLARDAYLLLADLKIAIQRLGMHFNPNFEDAQVKVDFQIMQAEQIIFHFKRTYRDALKHNPDSITEFVEDELEDPGTPL.

A lipid anchor (N-myristoyl glycine) is attached at Gly2.

Expressed in the 2 embryonic head hypodermal cells XXXL/R.

It localises to the cell membrane. Its function is as follows. Together with eak-6 and sdf-9, negatively regulates dauer larva formation downstream of the insulin-like receptor daf-2 and in parallel with age-1, pdk-1 and akt-1. The sequence is that of Protein eak-4 from Caenorhabditis elegans.